A 495-amino-acid chain; its full sequence is SH2 domain-containing adapter protein E (495 aa).

Disordered stretches follow at residues 51-190 (TVSE…DKGK), 203-233 (DYAD…EPYD), and 256-327 (LLDS…EYEQ). Residue Ser-107 is modified to Phosphoserine. Residues 135-144 (TKSSGCSTYI) show a composition bias toward polar residues. Residues 148–157 (IKVDTQEKNG) show a composition bias toward basic and acidic residues. Over residues 162–181 (PSSSSSSSSSSSSASSSPSS) the composition is skewed to low complexity. Basic and acidic residues-rich tracts occupy residues 208 to 224 (YDAK…RVGE) and 301 to 327 (PRAE…EYEQ). The SH2 domain maps to 395–490 (WYHGAISRAE…AEHMTLLYPV (96 aa)).

In Homo sapiens (Human), this protein is SH2 domain-containing adapter protein E (SHE).